Here is a 428-residue protein sequence, read N- to C-terminus: Trigger factor (428 aa).

A PPIase FKBP-type domain is found at 163–248 (GDTAIIDFEG…INDVKVKELS (86 aa)).

Belongs to the FKBP-type PPIase family. Tig subfamily.

The protein localises to the cytoplasm. The enzyme catalyses [protein]-peptidylproline (omega=180) = [protein]-peptidylproline (omega=0). In terms of biological role, involved in protein export. Acts as a chaperone by maintaining the newly synthesized protein in an open conformation. Functions as a peptidyl-prolyl cis-trans isomerase. The protein is Trigger factor of Clostridioides difficile (strain 630) (Peptoclostridium difficile).